Consider the following 911-residue polypeptide: Epithelial discoidin domain-containing receptor 1 (911 aa).

The N-terminal stretch at 1–19 is a signal peptide; that stretch reads MGTGTLSSLLLLLLLVTIG. At 22-415 the chain is on the extracellular side; sequence DMKGHFDPAK…VAKAEGSPTA (394 aa). The region spanning 32–186 is the F5/8 type C domain; it reads CRYALGMQDR…VCLRVELYGC (155 aa). 2 cysteine pairs are disulfide-bonded: C32–C186 and C75–C178. A DS-like domain region spans residues 193 to 369; sequence LSYTAPVGQT…LFSEISFISD (177 aa). Positions 213, 232, 235, 237, 255, and 257 each coordinate Ca(2+). N-linked (GlcNAc...) asparagine glycosylation is present at N213. N-linked (GlcNAc...) asparagine glycosylation is present at N262. Residues C305 and C350 are joined by a disulfide bond. Ca(2+) contacts are provided by S362 and E363. 2 N-linked (GlcNAc...) asparagine glycosylation sites follow: N372 and N392. A helical membrane pass occupies residues 416–436; the sequence is ILIGCLVAIILLLLLIIALML. Residues 437 to 911 are Cytoplasmic-facing; it reads WRLHWRRLLS…FLADDALNTV (475 aa). The interval 468-496 is disordered; it reads ILINNRPGPREPPPYQEPRPRGTPPHSAP. Residues 477 to 494 show a composition bias toward pro residues; the sequence is REPPPYQEPRPRGTPPHS. Positions 479–482 match the PPxY motif motif; sequence PPPY. A phosphotyrosine; by autocatalysis mark is found at Y482, Y511, and Y518. A Protein kinase domain is found at 608–903; that stretch reads LRFKEKLGEG…PPFAQLHRFL (296 aa). Residues 614-622 and K653 each bind ATP; that span reads LGEGQFGEV. Residue Y738 is modified to Phosphotyrosine; by autocatalysis. The active-site Proton acceptor is the D764. Phosphotyrosine; by autocatalysis is present on residues Y790, Y794, and Y795.

Belongs to the protein kinase superfamily. Tyr protein kinase family. Insulin receptor subfamily. In terms of assembly, homodimer. Interacts (via PPxY motif) with WWC1 (via WW domains) in a collagen-regulated manner. Forms a tripartite complex with WWC1 and PRKCZ, but predominantly in the absence of collagen. Interacts (tyrosine phosphorylated) with SHC1. Interacts with SRC. Interacts with MYH9. Interacts with CDH1. Interacts with PTPN11. Interacts with NCK2. In terms of processing, autophosphorylated in response to fibrillar collagen binding. Detected in the cochlea and the organ of Corti in the inner ear. Isoform 1 is predominant and is expressed in developing embryo and adult brain. Isoform 2 is expressed in various epithelial cells.

Its subcellular location is the cell membrane. The catalysed reaction is L-tyrosyl-[protein] + ATP = O-phospho-L-tyrosyl-[protein] + ADP + H(+). In terms of biological role, tyrosine kinase that functions as a cell surface receptor for fibrillar collagen and regulates cell attachment to the extracellular matrix, remodeling of the extracellular matrix, cell migration, differentiation, survival and cell proliferation. Collagen binding triggers a signaling pathway that involves SRC and leads to the activation of MAP kinases. Regulates remodeling of the extracellular matrix by up-regulation of the matrix metalloproteinases MMP2, MMP7 and MMP9, and thereby facilitates cell migration and wound healing, but also tumor cell invasion. Promotes smooth muscle cell migration, and thereby contributes to arterial wound healing. Phosphorylates PTPN11. Required for normal blastocyst implantation during pregnancy, for normal mammary gland differentiation and normal lactation. Required for normal ear morphology and normal hearing. The chain is Epithelial discoidin domain-containing receptor 1 (Ddr1) from Mus musculus (Mouse).